A 358-amino-acid chain; its full sequence is GMP reductase (358 aa).

NADP(+) is bound by residues 26–27 (SR), Lys78, 130–132 (DVA), and 181–182 (IG). Positions 182, 184, and 187 each coordinate K(+). Cys187 serves as the catalytic Thioimidate intermediate. Thr189 serves as the catalytic Proton donor/acceptor. Arg190 provides a ligand contact to K(+). Residues 220–222 (DGG), 243–244 (GG), 269–271 (GMS), and 287–291 (RASEG) contribute to the GMP site. Residues Met270, 286–287 (YR), and 315–318 (SACT) contribute to the NADP(+) site.

It belongs to the IMPDH/GMPR family. GuaC type 1 subfamily. As to quaternary structure, homotetramer.

It carries out the reaction IMP + NH4(+) + NADP(+) = GMP + NADPH + 2 H(+). Its function is as follows. Catalyzes the irreversible NADPH-dependent deamination of GMP to IMP. It functions in the conversion of nucleobase, nucleoside and nucleotide derivatives of G to A nucleotides, and in maintaining the intracellular balance of A and G nucleotides. In Caenorhabditis elegans, this protein is GMP reductase.